Reading from the N-terminus, the 220-residue chain is UPF0319 protein YccT (220 aa).

Residues 1–20 (MKTGIVTTLIALCLPVSVFA) form the signal peptide.

It belongs to the UPF0319 family.

This is UPF0319 protein YccT from Shigella flexneri serotype 5b (strain 8401).